We begin with the raw amino-acid sequence, 874 residues long: Alanine--tRNA ligase (874 aa).

Histidine 559, histidine 563, cysteine 661, and histidine 665 together coordinate Zn(2+).

It belongs to the class-II aminoacyl-tRNA synthetase family. It depends on Zn(2+) as a cofactor.

Its subcellular location is the cytoplasm. It catalyses the reaction tRNA(Ala) + L-alanine + ATP = L-alanyl-tRNA(Ala) + AMP + diphosphate. In terms of biological role, catalyzes the attachment of alanine to tRNA(Ala) in a two-step reaction: alanine is first activated by ATP to form Ala-AMP and then transferred to the acceptor end of tRNA(Ala). Also edits incorrectly charged Ser-tRNA(Ala) and Gly-tRNA(Ala) via its editing domain. This is Alanine--tRNA ligase from Microcystis aeruginosa (strain NIES-843 / IAM M-2473).